The following is a 299-amino-acid chain: UBX domain-containing protein 1 (299 aa).

3 disordered regions span residues 39 to 61, 127 to 176, and 191 to 218; these read AGVPMETDAPAQAAPGAADSGAP, KAKL…NEDE, and EARKAKASGQPVPEAKPAPSAAPVAPPK. The span at 46 to 61 shows a compositional bias: low complexity; the sequence is DAPAQAAPGAADSGAP. The stretch at 111–179 forms a coiled coil; it reads AKVLEIREKI…REKNEDEIAR (69 aa). Positions 128–176 are enriched in basic and acidic residues; the sequence is AKLEAEENREKEKKRREDGKAMISHKEAARDREIREAAQDRRREKNEDE. A compositionally biased stretch (low complexity) spans 201 to 213; the sequence is PVPEAKPAPSAAP. Residues 218 to 295 enclose the UBX domain; it reads KDYSTTTLQF…NLVPSANVIL (78 aa).

As to quaternary structure, interacts with cdc-48.1 (via N-terminus) and cdc-48.2 (via N-terminus) in vitro; the interaction with cdc-48.1 is not detected in vivo. Expressed in the germline (at protein level). Expressed in spermatocytes but not in mature sperm (at protein level). Ubiquitously expressed. Predominantly expressed in the spermatheca.

It localises to the cytoplasm. Its subcellular location is the perinuclear region. Ubiquitin-binding protein which acts as an adapter for ATPase cdc-48.1 and/or cdc-48.2, conferring substrate specificity. Together with ubxn-2 and ubxn-3, plays a role in hermaphrodite spermatogenesis probably by promoting the degradation of sex determination terminal factor tra-1. The chain is UBX domain-containing protein 1 from Caenorhabditis elegans.